A 3078-amino-acid chain; its full sequence is Homeobox-like protein HDP1 (3078 aa).

Disordered stretches follow at residues 1–29, 59–164, 203–306, 949–980, 1323–1390, 1415–1445, 1939–2046, 2115–2216, 2599–2637, and 2959–3019; these read MKRG…DNSN, LHNS…INDN, SKRK…NIGK, NAEI…QDEN, DEDS…KDRK, SSSN…NNKN, KVND…QDKF, TNES…QYNY, AYMN…DDNI, and QQNN…NNGP. Residues 14-29 are compositionally biased toward polar residues; the sequence is CPSNGMASSQRNDNSN. The segment covering 59 to 84 has biased composition (basic and acidic residues); the sequence is LHNSSSRESKDMKLSEEPRHINEKCI. 2 stretches are compositionally biased toward low complexity: residues 85-94 and 114-127; these read NDNNKINNNN and NNNN…TKNN. Polar residues-rich tracts occupy residues 128–137, 148–157, 209–229, 237–252, and 949–960; these read IFFQTNNPDT, KQENTSSSLH, NSNN…NNIT, TSSI…NTVH, and NAEIHESNSPNH. Positions 1368 to 1380 are enriched in basic residues; the sequence is RKNKINRGSKGKH. Over residues 1415–1433 the composition is skewed to low complexity; the sequence is SSSNYEEGNSSSNEENNIS. Residues 1434–1445 show a composition bias toward polar residues; the sequence is TDKNISNTNNKN. Residues 1939–1993 are compositionally biased toward low complexity; that stretch reads KVNDSNNSNDANEGNNANYSNDSSNTNNNTSSSTNNSNNNTSCSSQNTTTSSENN. 2 stretches are compositionally biased toward basic and acidic residues: residues 2012 to 2021 and 2029 to 2046; these read KDTQKEKNNL and YEDR…QDKF. Residues 2115–2126 show a composition bias toward polar residues; sequence TNESIKTNSDQN. Over residues 2139-2160 the composition is skewed to low complexity; the sequence is MNNDNYNSSYDNVHNDNDNNMV. Over residues 2163 to 2177 the composition is skewed to basic and acidic residues; the sequence is DSSRQDNMEKQKSGE. Positions 2192-2201 are enriched in acidic residues; the sequence is NDNDNDDNND. 3 stretches are compositionally biased toward low complexity: residues 2202–2216, 2602–2630, and 2959–2989; these read NDNN…QYNY, NDNN…YSYD, and QQNN…QKNN. Positions 2990–3006 are enriched in polar residues; it reads LSEVQVSNINTPSSYNI. Residues 2991–3078 form a DNA-binding region; the sequence is SEVQVSNINT…GKRRKNEDNK (88 aa).

As to quaternary structure, homodimer.

It is found in the nucleus. The protein localises to the chromosome. Transcriptional regulator which binds to the DNA motifs 5'-GTGCACAC-3' (motif A) and 5'-[GTA]TGTA[CT][GA]TAC-3' (motif B) of genes essential for early gametocyte development, including those critical for the expansion of the inner membrane complex (IMC). The sequence is that of Homeobox-like protein HDP1 from Plasmodium falciparum (isolate NF54).